The following is a 736-amino-acid chain: MPRYKTVEQVLSLMKDRTRVRNIGIIAHVDHGKTTTSDTLLAASGIISPKVAGEALALDYLNVEQQRGITVKAANISLYHEAEGKGYVINLIDTPGHVDFSGRVTRSLRVLDGSIVVVDAVEGIMTQTETVLRQSLEERVRPILFINKVDRLVKELKLSPQEMLNRLLDIIRQVNNLIDMYGEPEFKEKWMINPQAGNVIFGSAKDKWGFSLPMAQKKGINMKNVIDAYTASDKSKLEELAAQAPINEALLDAAIKFVPNPIEAQKYRIPKIWKGDLDNELAKAMLNADPNGPIVFMITDMKVDPHAGLVATGRVFSGTLRSGEELWLVNAKTSQRILQVSLYMGPTRELAEEIPAGNIAAVLGLDRARSGETAISVGFSNVQGSFERLHYISEPVVTIAVEPKNPKDLTKMIDALRKLSIEDPNLVVKINEETGEYLLSGMGFLHLEVSLQLLRENYGIDVVTTPPIVVYRESIRAKSQVFEGKSPNKHNKFYLSVEPLNDKTIELISNGTIREDMDSKEMAKILRDEASWDYDEAKRIIAIDENVNVFVDLTSGVQHLREVMDTVLQGFRLAMKEGPLAHEPIRGVKVILHDAVIHEDPAHRGPAQIYPAVRNSIFAGFLTSRPTLLEPIQKLDIRVPADLIGNVTAVITRKRGKILDVSQIANMSRITAEIPVSESYDMASELRGSTGGRAFWGTEFSRWAPVPDSILLDVVTKIRERKGLPKELPKVEDFLS.

The tr-type G domain maps to 18–234 (TRVRNIGIIA…VIDAYTASDK (217 aa)). Residues 27–34 (AHVDHGKT), 93–97 (DTPGH), and 147–150 (NKVD) each bind GTP. The residue at position 603 (His603) is a Diphthamide.

Belongs to the TRAFAC class translation factor GTPase superfamily. Classic translation factor GTPase family. EF-G/EF-2 subfamily.

It localises to the cytoplasm. In terms of biological role, catalyzes the GTP-dependent ribosomal translocation step during translation elongation. During this step, the ribosome changes from the pre-translocational (PRE) to the post-translocational (POST) state as the newly formed A-site-bound peptidyl-tRNA and P-site-bound deacylated tRNA move to the P and E sites, respectively. Catalyzes the coordinated movement of the two tRNA molecules, the mRNA and conformational changes in the ribosome. The protein is Elongation factor 2 (fusA) of Saccharolobus solfataricus (strain ATCC 35092 / DSM 1617 / JCM 11322 / P2) (Sulfolobus solfataricus).